Consider the following 242-residue polypeptide: Probable transcriptional regulatory protein XCV3282 (242 aa).

The protein belongs to the TACO1 family.

Its subcellular location is the cytoplasm. The protein is Probable transcriptional regulatory protein XCV3282 of Xanthomonas euvesicatoria pv. vesicatoria (strain 85-10) (Xanthomonas campestris pv. vesicatoria).